A 182-amino-acid polypeptide reads, in one-letter code: MENNFQVFRLISENFSEVSHSIGLNSDFLEANVLNIMLLLFGLIYVLKQFLGSLLTIRQEKVIFAISECEERLQQANNRLLESEKQLEQTQLVITQVLNDAEITAQKVRQSILDKGKIDVEKLIGASKASIVVAENQINQQIKQKITALAIQKVSSQLKAQVDTTMQAKIIDSSIIKLRGDI.

The helical transmembrane segment at 33 to 55 threads the bilayer; sequence VLNIMLLLFGLIYVLKQFLGSLL.

This sequence belongs to the ATPase B chain family. In terms of assembly, F-type ATPases have 2 components, F(1) - the catalytic core - and F(0) - the membrane proton channel. F(1) has five subunits: alpha(3), beta(3), gamma(1), delta(1), epsilon(1). F(0) has four main subunits: a(1), b(1), b'(1) and c(10-14). The alpha and beta chains form an alternating ring which encloses part of the gamma chain. F(1) is attached to F(0) by a central stalk formed by the gamma and epsilon chains, while a peripheral stalk is formed by the delta, b and b' chains.

It localises to the plastid. It is found in the chloroplast thylakoid membrane. In terms of biological role, f(1)F(0) ATP synthase produces ATP from ADP in the presence of a proton or sodium gradient. F-type ATPases consist of two structural domains, F(1) containing the extramembraneous catalytic core and F(0) containing the membrane proton channel, linked together by a central stalk and a peripheral stalk. During catalysis, ATP synthesis in the catalytic domain of F(1) is coupled via a rotary mechanism of the central stalk subunits to proton translocation. Functionally, component of the F(0) channel, it forms part of the peripheral stalk, linking F(1) to F(0). This is ATP synthase subunit b, chloroplastic from Antithamnion sp. (Red alga).